The chain runs to 83 residues: Sulfur carrier protein TusA (83 aa).

The active-site Cysteine persulfide intermediate is C20.

The protein belongs to the sulfur carrier protein TusA family.

Its subcellular location is the cytoplasm. In terms of biological role, sulfur carrier protein which probably makes part of a sulfur-relay system. This is Sulfur carrier protein TusA from Pseudomonas fluorescens (strain SBW25).